We begin with the raw amino-acid sequence, 251 residues long: S-acyl fatty acid synthase thioesterase, medium chain (251 aa).

Active-site residues include S90 and H226.

It belongs to the thioesterase family.

The enzyme catalyses (9Z)-octadecenoyl-[ACP] + H2O = (9Z)-octadecenoate + holo-[ACP] + H(+). In terms of biological role, in fatty acid biosynthesis chain termination and release of the free fatty acid product is achieved by hydrolysis of the thio ester by a thioesterase I, a component of the fatty acid synthetase complex. The chain length of the released fatty acid is usually C16. However, in the mammary glands of non-ruminant mammals, and in the uropygial gland of certain waterfowl there exists a second thioesterase which releases medium-chain length fatty acids (C8 to C2). In Anas platyrhynchos (Mallard), this protein is S-acyl fatty acid synthase thioesterase, medium chain.